Here is a 450-residue protein sequence, read N- to C-terminus: Glucose-6-phosphate isomerase (450 aa).

Residue Thr-39 is modified to Phosphothreonine. Glu-291 (proton donor) is an active-site residue. Active-site residues include His-312 and Lys-426.

This sequence belongs to the GPI family.

It localises to the cytoplasm. The enzyme catalyses alpha-D-glucose 6-phosphate = beta-D-fructose 6-phosphate. The protein operates within carbohydrate biosynthesis; gluconeogenesis. It participates in carbohydrate degradation; glycolysis; D-glyceraldehyde 3-phosphate and glycerone phosphate from D-glucose: step 2/4. Its function is as follows. Catalyzes the reversible isomerization of glucose-6-phosphate to fructose-6-phosphate. This is Glucose-6-phosphate isomerase from Bacillus anthracis.